The primary structure comprises 185 residues: Lactoylglutathione lyase (185 aa).

The disordered stretch occupies residues 1-22; the sequence is MASEARESPANNPGLSTNRDEA. Residues 27–174 form the VOC domain; the sequence is IMQQTMFRIK…DGYWIEIFDL (148 aa). Residues Gln-30 and Arg-34 each coordinate substrate. Residue Gln-30 participates in Zn(2+) binding. Residue Glu-96 participates in Zn(2+) binding. Substrate is bound by residues Asn-100, Arg-120, His-124, and 154–155; that span reads KM. His-124 lines the Zn(2+) pocket. Residue Glu-170 coordinates Zn(2+). Catalysis depends on Glu-170, which acts as the Proton donor/acceptor.

Belongs to the glyoxalase I family. Zn(2+) serves as cofactor.

The catalysed reaction is (R)-S-lactoylglutathione = methylglyoxal + glutathione. It functions in the pathway secondary metabolite metabolism; methylglyoxal degradation; (R)-lactate from methylglyoxal: step 1/2. Catalyzes the conversion of hemimercaptal, formed from methylglyoxal and glutathione, to S-lactoylglutathione. The sequence is that of Lactoylglutathione lyase from Arabidopsis thaliana (Mouse-ear cress).